The chain runs to 68 residues: Small ribosomal subunit protein bS21 (68 aa).

It belongs to the bacterial ribosomal protein bS21 family.

This Ruegeria pomeroyi (strain ATCC 700808 / DSM 15171 / DSS-3) (Silicibacter pomeroyi) protein is Small ribosomal subunit protein bS21.